The primary structure comprises 117 residues: MDKKSARIRRATRARRKLQELGATRLVVHRTPRHIYAQVIAPNGSEVLVAASTVEKAISEQLKYTGNKDAAAAVGKAVAERALEKGIKDVSFDRSGFQYHGRVQALADAAREAGLQF.

This sequence belongs to the universal ribosomal protein uL18 family. In terms of assembly, part of the 50S ribosomal subunit; part of the 5S rRNA/L5/L18/L25 subcomplex. Contacts the 5S and 23S rRNAs.

In terms of biological role, this is one of the proteins that bind and probably mediate the attachment of the 5S RNA into the large ribosomal subunit, where it forms part of the central protuberance. The protein is Large ribosomal subunit protein uL18 of Klebsiella pneumoniae (strain 342).